The following is a 709-amino-acid chain: Polyribonucleotide nucleotidyltransferase (709 aa).

Residues aspartate 485 and aspartate 491 each contribute to the Mg(2+) site. The 60-residue stretch at 552–611 folds into the KH domain; sequence PRIYTMKIDPKKIKDVIGKGGATIRSLTEETGTSIDIDDDGTVKIAAVDSNAAKNVMGRI. Residues 621 to 689 form the S1 motif domain; it reads GAIYKGKVTR…RQGRIRLTMK (69 aa).

It belongs to the polyribonucleotide nucleotidyltransferase family. In terms of assembly, component of the RNA degradosome, which is a multiprotein complex involved in RNA processing and mRNA degradation. Mg(2+) is required as a cofactor.

The protein localises to the cytoplasm. It catalyses the reaction RNA(n+1) + phosphate = RNA(n) + a ribonucleoside 5'-diphosphate. Involved in mRNA degradation. Catalyzes the phosphorolysis of single-stranded polyribonucleotides processively in the 3'- to 5'-direction. The chain is Polyribonucleotide nucleotidyltransferase from Haemophilus influenzae (strain 86-028NP).